The primary structure comprises 98 residues: Cystatin-B (98 aa).

N-acetylmethionine is present on Met-1. The short motif at 46–50 (QVVAG) is the Secondary area of contact element.

This sequence belongs to the cystatin family. In terms of assembly, able to form dimers stabilized by noncovalent forces.

Its subcellular location is the cytoplasm. It is found in the nucleus. This is an intracellular thiol proteinase inhibitor. Tightly binding reversible inhibitor of cathepsins L, H and B. The chain is Cystatin-B (CSTB) from Pan troglodytes (Chimpanzee).